The following is a 505-amino-acid chain: Trans-cinnamate 4-monooxygenase (505 aa).

The chain crosses the membrane as a helical span at residues 3 to 23; that stretch reads LLLLEKTLLALFIAATIAITI. (E)-cinnamate is bound by residues 212–217 and alanine 305; that span reads RSRLAQ. Cysteine 446 is a binding site for heme.

It belongs to the cytochrome P450 family. Heme serves as cofactor.

The protein localises to the membrane. It catalyses the reaction (E)-cinnamate + reduced [NADPH--hemoprotein reductase] + O2 = (E)-4-coumarate + oxidized [NADPH--hemoprotein reductase] + H2O + H(+). It participates in phenylpropanoid metabolism; trans-4-coumarate biosynthesis; trans-4-coumarate from trans-cinnamate: step 1/1. Its function is as follows. Catalyzes the first oxidative step of the phenylpropanoid pathway in higher plants by transforming trans-cinnamate into p-coumarate. The compounds formed by this pathway are essential components for lignification, pollination, and defense against ultraviolet light, predators and pathogens. The protein is Trans-cinnamate 4-monooxygenase (CYP73A19) of Cicer arietinum (Chickpea).